Here is a 148-residue protein sequence, read N- to C-terminus: 3-dehydroquinate dehydratase (148 aa).

Residue Y24 is the Proton acceptor of the active site. 3 residues coordinate substrate: N75, H81, and D88. H101 serves as the catalytic Proton donor. Substrate-binding positions include 102-103 (LS) and R112.

This sequence belongs to the type-II 3-dehydroquinase family. Homododecamer.

The catalysed reaction is 3-dehydroquinate = 3-dehydroshikimate + H2O. The protein operates within metabolic intermediate biosynthesis; chorismate biosynthesis; chorismate from D-erythrose 4-phosphate and phosphoenolpyruvate: step 3/7. Its function is as follows. Catalyzes a trans-dehydration via an enolate intermediate. In Rhizobium meliloti (strain 1021) (Ensifer meliloti), this protein is 3-dehydroquinate dehydratase.